The following is a 513-amino-acid chain: Maturase K (513 aa).

It belongs to the intron maturase 2 family. MatK subfamily.

The protein resides in the plastid. It localises to the chloroplast. Functionally, usually encoded in the trnK tRNA gene intron. Probably assists in splicing its own and other chloroplast group II introns. The sequence is that of Maturase K from Cynodon dactylon (Bermuda grass).